The chain runs to 480 residues: Cobyric acid synthase (480 aa).

The 188-residue stretch at 249 to 436 folds into the GATase cobBQ-type domain; it reads KLKVVVPVLT…LHGFLDSEAA (188 aa). The active-site Nucleophile is the Cys330. His428 is a catalytic residue.

This sequence belongs to the CobB/CobQ family. CobQ subfamily.

The protein operates within cofactor biosynthesis; adenosylcobalamin biosynthesis. Its function is as follows. Catalyzes amidations at positions B, D, E, and G on adenosylcobyrinic A,C-diamide. NH(2) groups are provided by glutamine, and one molecule of ATP is hydrogenolyzed for each amidation. The polypeptide is Cobyric acid synthase (Vibrio vulnificus (strain YJ016)).